Consider the following 117-residue polypeptide: Conotoxin vil14.2 (117 aa).

The first 22 residues, 1-22 (MGFRVLVLVVMATTFALPFTFF), serve as a signal peptide directing secretion. Residues 23–90 (EEPGRSPFRP…FAELSVGQRR (68 aa)) constitute a propeptide that is removed on maturation. The tract at residues 53 to 77 (RADGQPPDMRQPEMRRPEMRRPEVR) is disordered. Positions 62 to 77 (RQPEMRRPEMRRPEVR) are enriched in basic and acidic residues. Intrachain disulfides connect Cys96/Cys116 and Cys100/Cys112.

Belongs to the conotoxin R superfamily. As to expression, expressed by the venom duct.

The protein resides in the secreted. This Conus villepinii (Villepin's cone) protein is Conotoxin vil14.2.